Here is a 464-residue protein sequence, read N- to C-terminus: Mothers against decapentaplegic homolog 5 (464 aa).

The MH1 domain maps to 13–137; it reads PAVKRLLGWK…YKRVESPVLP (125 aa). Zn(2+) contacts are provided by cysteine 65, cysteine 110, cysteine 122, and histidine 127. Residues 166–258 form a disordered region; sequence HMPLNATFPE…LAPQNMPRGD (93 aa). Residues 173 to 183 are compositionally biased toward polar residues; it reads FPESFQQHSGG. The span at 199-216 shows a compositional bias: low complexity; sequence ASSGTYPNSPASSGPSSP. Residues 237-251 are compositionally biased toward polar residues; sequence QDGSQSMETGSSLAP. The region spanning 270–464 is the MH2 domain; the sequence is WCSIVYYELN…SPLNPISSVS (195 aa).

It belongs to the dwarfin/SMAD family. As to quaternary structure, may form trimers with the co-SMAD SMAD4.

Its subcellular location is the cytoplasm. The protein localises to the nucleus. In terms of biological role, involved in ventralization. May mediate Bmp2b signaling during early phases of embryonic dorsal-ventral pattern formation. Required for initiation of Smad1 expression during gastrulation. This chain is Mothers against decapentaplegic homolog 5 (smad5), found in Danio rerio (Zebrafish).